The chain runs to 193 residues: Ganglioside GM2 activator (193 aa).

An N-terminal signal peptide occupies residues methionine 1–proline 20. 4 disulfide bridges follow: cysteine 39–cysteine 183, cysteine 99–cysteine 106, cysteine 112–cysteine 138, and cysteine 125–cysteine 136. N-linked (GlcNAc...) asparagine glycosylation is present at asparagine 151.

As to expression, widely expressed. Most abundant in kidney and testis.

Its subcellular location is the lysosome. It carries out the reaction cholesterol(in) = cholesterol(out). Binds gangliosides and stimulates ganglioside GM2 degradation. It stimulates only the breakdown of ganglioside GM2 and glycolipid GA2 by beta-hexosaminidase A. It extracts single GM2 molecules from membranes and presents them in soluble form to beta-hexosaminidase A for cleavage of N-acetyl-D-galactosamine and conversion to GM3. The large binding pocket can accommodate several single chain phospholipids and fatty acids, GM2A also exhibits some calcium-independent phospholipase activity. Has cholesterol transfer activity. The protein is Ganglioside GM2 activator of Mus musculus (Mouse).